Here is a 461-residue protein sequence, read N- to C-terminus: Gram-negative bacteria-binding protein 2 (461 aa).

The signal sequence occupies residues 1 to 20; it reads MRWEFLPCLLLLISNNKIFG. The CBM39 domain occupies 21–115; that stretch reads FKVPSINFEM…TRVIINTRLL (95 aa). N-linked (GlcNAc...) asparagine glycans are attached at residues Asn-71, Asn-170, Asn-177, and Asn-364. The GH16 domain maps to 179–461; that stretch reads TTWKHDIRQR…VIDYVRVYAE (283 aa).

Belongs to the insect beta-1,3-glucan binding protein family.

Its subcellular location is the secreted. In terms of biological role, involved in the recognition of invading microorganisms. Binds specifically to beta-1,3-glucan and activates the phenoloxidase cascade. The polypeptide is Gram-negative bacteria-binding protein 2 (Drosophila melanogaster (Fruit fly)).